A 540-amino-acid polypeptide reads, in one-letter code: Chaperonin GroEL 4 (540 aa).

ATP is bound by residues 29–32 (TLGP), 86–90 (DGTTT), glycine 413, 477–479 (NAA), and aspartate 493.

It belongs to the chaperonin (HSP60) family. In terms of assembly, forms a cylinder of 14 subunits composed of two heptameric rings stacked back-to-back. Interacts with the co-chaperonin GroES.

It localises to the cytoplasm. The catalysed reaction is ATP + H2O + a folded polypeptide = ADP + phosphate + an unfolded polypeptide.. Its function is as follows. Together with its co-chaperonin GroES, plays an essential role in assisting protein folding. The GroEL-GroES system forms a nano-cage that allows encapsulation of the non-native substrate proteins and provides a physical environment optimized to promote and accelerate protein folding. The polypeptide is Chaperonin GroEL 4 (Frankia alni (strain DSM 45986 / CECT 9034 / ACN14a)).